The following is a 504-amino-acid chain: UDP-N-acetylmuramoylalanine--D-glutamate ligase (504 aa).

Residue 132–138 participates in ATP binding; that stretch reads GTNGKTT. A compositionally biased stretch (basic and acidic residues) spans 286-295; sequence DRDASDEPAP. Residues 286 to 305 are disordered; that stretch reads DRDASDEPAPKRRRKNEVAT.

The protein belongs to the MurCDEF family.

The protein resides in the cytoplasm. It catalyses the reaction UDP-N-acetyl-alpha-D-muramoyl-L-alanine + D-glutamate + ATP = UDP-N-acetyl-alpha-D-muramoyl-L-alanyl-D-glutamate + ADP + phosphate + H(+). It participates in cell wall biogenesis; peptidoglycan biosynthesis. Functionally, cell wall formation. Catalyzes the addition of glutamate to the nucleotide precursor UDP-N-acetylmuramoyl-L-alanine (UMA). This is UDP-N-acetylmuramoylalanine--D-glutamate ligase from Paraburkholderia xenovorans (strain LB400).